Consider the following 296-residue polypeptide: MSAGDPRVGSGSLDSFMFSIPLVALNVGVRRRLSLFLNPRTPVAADWTLLAEEMGFEYLEIRELETRPDPTRSLLDAWQGRSGASVGRLLELLALLDREDILKELKSRIEEDCQKYLGKQQNQESEKPLQVARVESSVPQTKELGGITTLDDPLGQTPELFDAFICYCPNDIEFVQEMIRQLEQTDYRLKLCVSDRDVLPGTCVWSIASELIEKRCRRMVVVVSDDYLQSKECDFQTKFALSLSPGVQQKRLIPIKYKAMKKDFPSILRFITICDYTNPCTKSWFWTRLAKALSLP.

In terms of domain architecture, Death spans 54-109 (MGFEYLEIRELETRPDPTRSLLDAWQGRSGASVGRLLELLALLDREDILKELKSRI). Residues 110–155 (EEDCQKYLGKQQNQESEKPLQVARVESSVPQTKELGGITTLDDPLG) form an intermediate domain region. Residues 159-293 (ELFDAFICYC…WFWTRLAKAL (135 aa)) enclose the TIR domain. Ser-244 bears the Phosphoserine mark.

As to quaternary structure, homodimer. Also forms heterodimers with TIRAP. Binds to TLR2, TLR4, IRAK1, IRAK2 and IRAK4 via their respective TIR domains. Interacts with IL18R1. Interacts with BMX, IL1RL1, IKBKE and IRF7. Interacts with LRRFIP1 and LRRFIP2; this interaction positively regulates Toll-like receptor (TLR) signaling in response to agonist. Interacts with FLII. LRRFIP1 and LRRFIP2 compete with FLII for MYD88-binding. Interacts with IRF1. Upon IL1B treatment, forms a complex with PELI1, IRAK1, IRAK4 and TRAF6; this complex recruits MAP3K7/TAK1, TAB1 and TAB2 to mediate NF-kappa-B activation. Direct binding of SMAD6 to PELI1 prevents the complex formation and hence negatively regulates IL1R-TLR signaling and eventually NF-kappa-B-mediated gene expression. May interact with PIK3AP1. Interacts (via TIR domain) with DHX9 (via H2A and OB-fold regions); this interaction is direct. Interacts with OTUD4 deubiquitinase; the interaction is direct. Ubiquitinated; undergoes 'Lys-63'-linked polyubiquitination. OTUD4 specifically hydrolyzes 'Lys-63'-linked polyubiquitinated MYD88. Deubiquitinated by USP3 that cleaves 'Lys-63'-linked ubiquitin chains leading to inhibition of MYD88-induced NF-kappa-B signaling. Detected in bone marrow. Isoform 1 is expressed in testis, kidney, lung, ovary, adrenal gland, provstate, thymus and heart, and weakly in skeletal muscle, liver, spleen and brain. Isoform 2 is mainly expressed in the spleen and weakly in brain.

The protein resides in the cytoplasm. Its subcellular location is the nucleus. In terms of biological role, adapter protein involved in the Toll-like receptor and IL-1 receptor signaling pathway in the innate immune response. Acts via IRAK1, IRAK2, IRF7 and TRAF6, leading to NF-kappa-B activation, cytokine secretion and the inflammatory response. Increases IL-8 transcription. Involved in IL-18-mediated signaling pathway. Activates IRF1 resulting in its rapid migration into the nucleus to mediate an efficient induction of IFN-beta, NOS2/INOS, and IL12A genes. Upon TLR8 activation by GU-rich single-stranded RNA (GU-rich RNA) derived from viruses, induces IL1B release through NLRP3 inflammasome activation. MyD88-mediated signaling in intestinal epithelial cells is crucial for maintenance of gut homeostasis and controls the expression of the antimicrobial lectin REG3G in the small intestine. Mediates leukocyte recruitment at the inflammatory site. Functionally, defective in its ability to induce IRAK phosphorylation and NF-kappa-B activation and can function as a negative regulator of activation by IL-1 or lipopolysaccharide (LPS). The chain is Myeloid differentiation primary response protein MyD88 from Mus musculus (Mouse).